The following is a 250-amino-acid chain: N-acyl homoserine lactonase (250 aa).

Zn(2+) is bound by residues histidine 104, histidine 106, aspartate 108, histidine 109, histidine 169, aspartate 191, and histidine 235.

The protein belongs to the metallo-beta-lactamase superfamily. In terms of assembly, monomer. Zn(2+) is required as a cofactor.

It catalyses the reaction an N-acyl-L-homoserine lactone + H2O = an N-acyl-L-homoserine + H(+). In terms of biological role, catalyzes hydrolysis of N-hexanoyl-(S)-homoserine lactone, but not the R-enantiomer. Hydrolyzes short- and long-chain N-acyl homoserine lactones with or without 3-oxo substitution at C3, has maximum activity on C10-AHL. The chain is N-acyl homoserine lactonase from Bacillus thuringiensis subsp. indiana.